The following is a 475-amino-acid chain: Siroheme synthase (475 aa).

The interval 1–204 (MDYLPVFLNI…GRDQAAQDYL (204 aa)) is precorrin-2 dehydrogenase /sirohydrochlorin ferrochelatase. NAD(+)-binding positions include 22 to 23 (EI) and 43 to 44 (PA). S129 carries the phosphoserine modification. The segment at 218–475 (GEVYLVGAGP…MGTSSGPGYP (258 aa)) is uroporphyrinogen-III C-methyltransferase. S-adenosyl-L-methionine is bound at residue P227. The active-site Proton acceptor is D250. The active-site Proton donor is the K272. Residues 303–305 (GGD), I308, 333–334 (TA), M385, and G414 contribute to the S-adenosyl-L-methionine site.

The protein in the N-terminal section; belongs to the precorrin-2 dehydrogenase / sirohydrochlorin ferrochelatase family. In the C-terminal section; belongs to the precorrin methyltransferase family.

The catalysed reaction is uroporphyrinogen III + 2 S-adenosyl-L-methionine = precorrin-2 + 2 S-adenosyl-L-homocysteine + H(+). It catalyses the reaction precorrin-2 + NAD(+) = sirohydrochlorin + NADH + 2 H(+). It carries out the reaction siroheme + 2 H(+) = sirohydrochlorin + Fe(2+). The protein operates within cofactor biosynthesis; adenosylcobalamin biosynthesis; precorrin-2 from uroporphyrinogen III: step 1/1. It functions in the pathway cofactor biosynthesis; adenosylcobalamin biosynthesis; sirohydrochlorin from precorrin-2: step 1/1. Its pathway is porphyrin-containing compound metabolism; siroheme biosynthesis; precorrin-2 from uroporphyrinogen III: step 1/1. It participates in porphyrin-containing compound metabolism; siroheme biosynthesis; siroheme from sirohydrochlorin: step 1/1. The protein operates within porphyrin-containing compound metabolism; siroheme biosynthesis; sirohydrochlorin from precorrin-2: step 1/1. Its function is as follows. Multifunctional enzyme that catalyzes the SAM-dependent methylations of uroporphyrinogen III at position C-2 and C-7 to form precorrin-2 via precorrin-1. Then it catalyzes the NAD-dependent ring dehydrogenation of precorrin-2 to yield sirohydrochlorin. Finally, it catalyzes the ferrochelation of sirohydrochlorin to yield siroheme. This is Siroheme synthase from Nitrosomonas europaea (strain ATCC 19718 / CIP 103999 / KCTC 2705 / NBRC 14298).